Consider the following 234-residue polypeptide: Ribosomal RNA large subunit methyltransferase E (234 aa).

Positions Met-1–Ser-37 are disordered. S-adenosyl-L-methionine contacts are provided by Gly-91, Trp-93, Asp-109, Asp-125, and Asp-149. The active-site Proton acceptor is the Lys-189.

This sequence belongs to the class I-like SAM-binding methyltransferase superfamily. RNA methyltransferase RlmE family.

The protein resides in the cytoplasm. The catalysed reaction is uridine(2552) in 23S rRNA + S-adenosyl-L-methionine = 2'-O-methyluridine(2552) in 23S rRNA + S-adenosyl-L-homocysteine + H(+). Specifically methylates the uridine in position 2552 of 23S rRNA at the 2'-O position of the ribose in the fully assembled 50S ribosomal subunit. This chain is Ribosomal RNA large subunit methyltransferase E, found in Hyphomonas neptunium (strain ATCC 15444).